Reading from the N-terminus, the 271-residue chain is 3-methyl-2-oxobutanoate hydroxymethyltransferase (271 aa).

2 residues coordinate Mg(2+): Asp49 and Asp88. 3-methyl-2-oxobutanoate is bound by residues 49-50, Asp88, and Lys118; that span reads DS. Glu120 contributes to the Mg(2+) binding site. Catalysis depends on Glu187, which acts as the Proton acceptor.

It belongs to the PanB family. In terms of assembly, homodecamer; pentamer of dimers. Mg(2+) serves as cofactor.

The protein localises to the cytoplasm. The enzyme catalyses 3-methyl-2-oxobutanoate + (6R)-5,10-methylene-5,6,7,8-tetrahydrofolate + H2O = 2-dehydropantoate + (6S)-5,6,7,8-tetrahydrofolate. It participates in cofactor biosynthesis; (R)-pantothenate biosynthesis; (R)-pantoate from 3-methyl-2-oxobutanoate: step 1/2. In terms of biological role, catalyzes the reversible reaction in which hydroxymethyl group from 5,10-methylenetetrahydrofolate is transferred onto alpha-ketoisovalerate to form ketopantoate. This Bartonella bacilliformis (strain ATCC 35685 / KC583 / Herrer 020/F12,63) protein is 3-methyl-2-oxobutanoate hydroxymethyltransferase.